The chain runs to 417 residues: Leucine-rich repeat-containing protein 42 (417 aa).

4 LRR repeats span residues 167–188 (CLHSLDLSCCKLGDEHELLAHL), 195–215 (SLTELYLKDNCLSNIGIQKMT), 227–248 (KLKVLDLSSNPGITDRGVCFLF), and 252–273 (LLKFLDLSDTSIQDPSGTLKKI). Positions 360-390 (FFRPKEQKDPDSSNSEKRRHSTKRTGADCVQ) are disordered. The segment covering 362–375 (RPKEQKDPDSSNSE) has biased composition (basic and acidic residues).

The protein belongs to the LRRC42 family.

The polypeptide is Leucine-rich repeat-containing protein 42 (lrrc42) (Xenopus laevis (African clawed frog)).